Reading from the N-terminus, the 81-residue chain is MGHHHHYAYTTTTPYIMPGVPPPVVYGAPPPMMVVPPPMGIVQPQVFVQGMVPPPVVYGAPPPMMGVPPPMGQPFYPPSYY.

This is an uncharacterized protein from Dictyostelium discoideum (Social amoeba).